We begin with the raw amino-acid sequence, 347 residues long: NADH-ubiquinone oxidoreductase chain 2 (347 aa).

A run of 10 helical transmembrane segments spans residues 3 to 23 (PPIL…VLTS), 25 to 45 (HWLL…PILM), 59 to 79 (YFLT…INLL), 93 to 115 (MAST…HFWV), 149 to 169 (INTN…GWGG), 178 to 198 (ILAY…TYNP), 200 to 220 (VMIL…MLFI), 242 to 262 (SFIL…GFIP), 274 to 294 (EMII…YFYM), and 323 to 343 (MALL…TPMM).

Belongs to the complex I subunit 2 family. Core subunit of respiratory chain NADH dehydrogenase (Complex I) which is composed of 45 different subunits. Interacts with TMEM242.

It is found in the mitochondrion inner membrane. It carries out the reaction a ubiquinone + NADH + 5 H(+)(in) = a ubiquinol + NAD(+) + 4 H(+)(out). Functionally, core subunit of the mitochondrial membrane respiratory chain NADH dehydrogenase (Complex I) which catalyzes electron transfer from NADH through the respiratory chain, using ubiquinone as an electron acceptor. Essential for the catalytic activity and assembly of complex I. This is NADH-ubiquinone oxidoreductase chain 2 from Nandinia binotata (African palm civet).